A 440-amino-acid chain; its full sequence is Streptokinase C (440 aa).

The N-terminal stretch at 1–26 (MKNYLSFGMFALLFALTFGTVNSVQA) is a signal peptide.

This protein is not a protease, but it activates plasminogen by complexing with it. As a potential virulence factor, it is thought to prevent the formation of effective fibrin barriers around the site of infection, thereby contributing to the invasiveness of the cells. The polypeptide is Streptokinase C (skc) (Streptococcus dysgalactiae subsp. equisimilis (Streptococcus equisimilis)).